The chain runs to 377 residues: MSKRDYYEVLGVSRDTSEREIKKAYKRLAMKFHPDRNPGDKTAEANFKEIKEAYEILTDADKKAAYDQFGHAGVDPNRGGGGYGGGQGDFGDIFGDVFGDIFGGGRRGGQRQAARGSDLRYNLELSLEEAVKGLTKELRIPTLATCDLCEGSGAKKGTSATTCGTCHGQGQVQMRQGFFAVQQPCPTCHGRGKIIKDPCSKCHGDGRVEKSKTLSVKIPAGVDTGDRIRLAGEGEAGEFGAPPGDLYVQVSVREHAIFVRDGNNLYCEVPISFSKAALGGEIEVPTLDGKVSLKIPAETQTGRMFRLRGKGVKSVRSHAVGDLLCKVVMETPVNLNDRQKELLREFEATLTGESKKHSPKAEGFFDGVKKFFQDLNS.

The J domain occupies 5–70; it reads DYYEVLGVSR…DKKAAYDQFG (66 aa). The segment at 133–211 adopts a CR-type zinc-finger fold; that stretch reads GLTKELRIPT…CHGDGRVEKS (79 aa). Zn(2+) contacts are provided by cysteine 146, cysteine 149, cysteine 163, cysteine 166, cysteine 185, cysteine 188, cysteine 199, and cysteine 202. CXXCXGXG motif repeat units lie at residues 146 to 153, 163 to 170, 185 to 192, and 199 to 206; these read CDLCEGSG, CGTCHGQG, CPTCHGRG, and CSKCHGDG.

It belongs to the DnaJ family. As to quaternary structure, homodimer. Zn(2+) serves as cofactor.

The protein resides in the cytoplasm. Its function is as follows. Participates actively in the response to hyperosmotic and heat shock by preventing the aggregation of stress-denatured proteins and by disaggregating proteins, also in an autonomous, DnaK-independent fashion. Unfolded proteins bind initially to DnaJ; upon interaction with the DnaJ-bound protein, DnaK hydrolyzes its bound ATP, resulting in the formation of a stable complex. GrpE releases ADP from DnaK; ATP binding to DnaK triggers the release of the substrate protein, thus completing the reaction cycle. Several rounds of ATP-dependent interactions between DnaJ, DnaK and GrpE are required for fully efficient folding. Also involved, together with DnaK and GrpE, in the DNA replication of plasmids through activation of initiation proteins. The sequence is that of Chaperone protein DnaJ from Shewanella baltica (strain OS195).